A 70-amino-acid polypeptide reads, in one-letter code: Protein FlmC homolog (70 aa).

Positions 1–21 (MSSPHQDSLLPRFAQGEEGHE) are disordered.

In Escherichia coli, this protein is Protein FlmC homolog.